Here is a 490-residue protein sequence, read N- to C-terminus: Arginine decarboxylase (490 aa).

Lys226 is subject to N6-(pyridoxal phosphate)lysine.

Belongs to the Orn/Lys/Arg decarboxylase class-I family. Pyridoxal 5'-phosphate is required as a cofactor.

The protein resides in the cytoplasm. The enzyme catalyses L-arginine + H(+) = agmatine + CO2. It participates in amine and polyamine biosynthesis; agmatine biosynthesis; agmatine from L-arginine: step 1/1. Catalyzes the formation of agmatine from arginine. This is Arginine decarboxylase (speA) from Bacillus subtilis (strain 168).